Reading from the N-terminus, the 216-residue chain is Adenylate kinase (216 aa).

10-15 (GAGKGT) contacts ATP. Residues 30-59 (STGDIFRKNISENTPLGIEAKGYIDNGQLV) are NMP. AMP contacts are provided by residues Thr-31, Arg-36, 57–59 (QLV), 85–88 (GFPR), and Gln-92. Positions 126 to 163 (GRRVCPSCGASYHVKFNPPTNEGKCDLCGSEVIQRKDD) are LID. Arg-127 is an ATP binding site. Cys-130 and Cys-133 together coordinate Zn(2+). Residue 136–137 (SY) coordinates ATP. Zn(2+) is bound by residues Cys-150 and Cys-153. AMP contacts are provided by Arg-160 and Arg-171. Residue Lys-199 participates in ATP binding.

The protein belongs to the adenylate kinase family. In terms of assembly, monomer.

It is found in the cytoplasm. It carries out the reaction AMP + ATP = 2 ADP. It participates in purine metabolism; AMP biosynthesis via salvage pathway; AMP from ADP: step 1/1. Functionally, catalyzes the reversible transfer of the terminal phosphate group between ATP and AMP. Plays an important role in cellular energy homeostasis and in adenine nucleotide metabolism. The sequence is that of Adenylate kinase from Clostridium beijerinckii (strain ATCC 51743 / NCIMB 8052) (Clostridium acetobutylicum).